A 663-amino-acid chain; its full sequence is ATP-dependent zinc metalloprotease FtsH (663 aa).

The Stromal segment spans residues 1-12 (MNKKETNTSWWR). Residues 13-33 (IILISLGISIICILAAFLAMK) traverse the membrane as a helical segment. Over 34-135 (DGFFVLENNT…HPPKLDIFKT (102 aa)) the chain is Lumenal. The helical transmembrane segment at 136-156 (ISDTLGSLIVPGLVVAVFYLF) threads the bilayer. Over 157 to 663 (LERANNNNNN…KIYESKFPKK (507 aa)) the chain is Stromal. Positions 165–184 (NNNSNGSPFGPGGGPNQNMR) are disordered. Residue 244-251 (GPPGTGKT) participates in ATP binding. Position 465 (histidine 465) interacts with Zn(2+). The active site involves glutamate 466. The Zn(2+) site is built by histidine 469 and aspartate 543.

This sequence in the central section; belongs to the AAA ATPase family. It in the C-terminal section; belongs to the peptidase M41 family. In terms of assembly, homohexamer. Zn(2+) serves as cofactor.

It localises to the plastid. Its subcellular location is the chloroplast thylakoid membrane. Acts as a processive, ATP-dependent zinc metallopeptidase. The protein is ATP-dependent zinc metalloprotease FtsH of Heterosigma akashiwo (strain NIES-293 / 8280G21-1).